Reading from the N-terminus, the 565-residue chain is Small ribosomal subunit protein bS1 (565 aa).

S1 motif domains are found at residues 30-96 (SSVI…LSRD), 114-180 (NEKV…VSRR), 201-269 (GQVI…LGMK), 286-356 (NARF…LGLK), 373-443 (GSTV…LGVK), and 454-529 (GDVK…VSIK).

It belongs to the bacterial ribosomal protein bS1 family. The initiator methionine may be removed.

Binds mRNA; thus facilitating recognition of the initiation point. It is needed to translate mRNA with a short Shine-Dalgarno (SD) purine-rich sequence. This Rhodopseudomonas palustris (strain ATCC BAA-98 / CGA009) protein is Small ribosomal subunit protein bS1 (rpsA).